The sequence spans 321 residues: D-alanine--D-alanine ligase (321 aa).

An ATP-grasp domain is found at 121 to 315; the sequence is RSWFLTNNIN…FTNLIEEIIK (195 aa). 147 to 199 lines the ATP pocket; sequence PVKRPYVIKPLTQGSSIGVEVIFEEDDFNFADYNFPYGYQVIIEQYIKGRELQ. Positions 268, 282, and 284 each coordinate Mg(2+).

This sequence belongs to the D-alanine--D-alanine ligase family. The cofactor is Mg(2+). Mn(2+) serves as cofactor.

It is found in the cytoplasm. It catalyses the reaction 2 D-alanine + ATP = D-alanyl-D-alanine + ADP + phosphate + H(+). It functions in the pathway cell wall biogenesis; peptidoglycan biosynthesis. Functionally, cell wall formation. This chain is D-alanine--D-alanine ligase, found in Rickettsia felis (strain ATCC VR-1525 / URRWXCal2) (Rickettsia azadi).